The chain runs to 333 residues: MIDSRFPLIDLHRHLDGNIRPQTILELGQQYRLALPANELEALRPHVQISDSVPDLVSFLQKLDWGVAVLATLDACRRVAYENVEDLKRAGIDYAELRFSPYYMAQRHGLPLQGVVEAIIDGVSAASRDVGVPVKLIGIMSRTFGQEACRQELEALLSGRERIAALDLAGDELGFPGDLFRSHFTRARDAGWHITVHAGEAAGAESIWQAIRELGAERIGHGVNAIQDARLMDYLAEHAIGVEACLTSNLQTSTVPSLAQHPLKHFLQHGIIANLNTDDPAVEGIELRHEYQTAAPAAGLSAEQIRQAQYNGLSMAFLSPAEKQVLRDAKQMC.

Positions 12 and 14 each coordinate Zn(2+). Substrate contacts are provided by histidine 14, aspartate 16, and glycine 170. Residue histidine 197 participates in Zn(2+) binding. Glutamate 200 acts as the Proton donor in catalysis. Aspartate 278 contacts Zn(2+). Position 279 (aspartate 279) interacts with substrate.

Belongs to the metallo-dependent hydrolases superfamily. Adenosine and AMP deaminases family. Adenosine deaminase subfamily. Zn(2+) is required as a cofactor.

It carries out the reaction adenosine + H2O + H(+) = inosine + NH4(+). It catalyses the reaction 2'-deoxyadenosine + H2O + H(+) = 2'-deoxyinosine + NH4(+). In terms of biological role, catalyzes the hydrolytic deamination of adenosine and 2-deoxyadenosine. This chain is Adenosine deaminase, found in Edwardsiella ictaluri (strain 93-146).